Reading from the N-terminus, the 221-residue chain is Sigma non-opioid intracellular receptor 1 (221 aa).

At 1–4 the chain is on the lumenal side; the sequence is MALW. A helical transmembrane segment spans residues 5-27; it reads RGLRAVLAVAGLAVAVQLLRGWL. Residues 28-221 are Cytoplasmic-facing; the sequence is GSKSYVFNRE…STHLSELGFF (194 aa). The important for ligand-binding stretch occupies residues 96 to 103; it reads SLTEYVLL. Residues 174–221 are C-terminal hydrophobic region; the sequence is FIPSTLGFALADTIFSTQDFLTLFYTVKVYGKALLLETSTHLSELGFF.

Belongs to the ERG2 family. As to quaternary structure, homotrimer.

The protein resides in the nucleus inner membrane. It is found in the nucleus outer membrane. Its subcellular location is the nucleus envelope. It localises to the cytoplasmic vesicle. The protein localises to the endoplasmic reticulum membrane. The protein resides in the membrane. May function in lipid transport from the endoplasmic reticulum and be involved in a wide array of cellular functions probably through regulation of the biogenesis of lipid microdomains at the plasma membrane. May regulate calcium efflux at the endoplasmic reticulum. The protein is Sigma non-opioid intracellular receptor 1 (sigmar1) of Xenopus tropicalis (Western clawed frog).